The primary structure comprises 368 residues: F-box only protein 28 (368 aa).

Basic and acidic residues predominate over residues 1–11; it reads MAAASEERMAE. The tract at residues 1–57 is disordered; the sequence is MAAASEERMAEEGGGGHGDGGSPSAIASTQRLPPPPPPQPPQPGSQAPPAPALAPDQ. The span at 12–21 shows a compositional bias: gly residues; the sequence is EGGGGHGDGG. Residues 32–52 show a composition bias toward pro residues; the sequence is LPPPPPPQPPQPGSQAPPAPA. In terms of domain architecture, F-box spans 61-109; the sequence is NNTLVALPIVAIENILSFMSYDEISQLRLVCKRMDLVCQRMLNQGFLKV. 2 positions are modified to phosphoserine: S235 and S242. Phosphothreonine is present on T270. The disordered stretch occupies residues 328–368; it reads MESAVGNSSGSGQSEESPRKRKKAAEAIDSLRKSKRLRNRK. S344 carries the post-translational modification Phosphoserine.

Part of a SCF (SKP1-cullin-F-box) protein ligase complex.

It is found in the chromosome. Its subcellular location is the centromere. The protein resides in the kinetochore. Functionally, probably recognizes and binds to some phosphorylated proteins and promotes their ubiquitination and degradation. The polypeptide is F-box only protein 28 (FBXO28) (Bos taurus (Bovine)).